Here is a 54-residue protein sequence, read N- to C-terminus: Ovomucoid (54 aa).

Residues 4–54 (VDCSDYPKPACTVEYMPLCGSDNKTYGNKCNFCNAVVDSNGTLTLSHFGKC) form the Kazal-like domain. 3 cysteine pairs are disulfide-bonded: Cys-6-Cys-36, Cys-14-Cys-33, and Cys-22-Cys-54. A glycan (N-linked (GlcNAc...) asparagine) is linked at Asn-43.

The protein localises to the secreted. This is Ovomucoid from Anser canagicus (Emperor goose).